The following is a 589-amino-acid chain: Cytoplasmic polyadenylation element-binding protein 2 (589 aa).

Disordered stretches follow at residues 1–103 (MPPP…QAAA) and 118–140 (PLLKQSPWSNHQSSGWGTGSMSW). The span at 24-33 (FFPSFSPVSP) shows a compositional bias: low complexity. Over residues 44-53 (SGGGGGGFGG) the composition is skewed to gly residues. A compositionally biased stretch (pro residues) spans 60 to 81 (VPPPPPPAMNIPQQQPPPPAAP). 2 stretches are compositionally biased toward low complexity: residues 82 to 103 (QQPQSRRSPVSPQLQQQHQAAA) and 130 to 140 (SSGWGTGSMSW). At S89 the chain carries Phosphoserine. RRM domains lie at 332-423 (RKVF…PWNL) and 440-522 (KTIF…PYVL).

Belongs to the RRM CPEB family. In terms of assembly, interacts with TENT2/GLD2.

It is found in the cytoplasm. May play a role in translational regulation of stored mRNAs in transcriptionally inactive haploid spermatids. Binds to poly(U) RNA oligomers. Required for cell cycle progression, specifically for the transition from metaphase to anaphase. This Homo sapiens (Human) protein is Cytoplasmic polyadenylation element-binding protein 2 (CPEB2).